An 85-amino-acid chain; its full sequence is U4-theraphotoxin-Hhn1l (85 aa).

The N-terminal stretch at 1 to 22 is a signal peptide; sequence MKVTLIAFLTCAAVLVLHTTAA. Residues 23-48 constitute a propeptide that is removed on maturation; sequence EELEAESQLMGVGMPDTELAAVDEER. Cystine bridges form between Cys-52-Cys-66, Cys-56-Cys-77, and Cys-71-Cys-82.

Belongs to the neurotoxin 12 (Hwtx-2) family. 02 (Hwtx-2) subfamily. Expressed by the venom gland.

It is found in the secreted. Its function is as follows. Postsynaptic neurotoxin. The protein is U4-theraphotoxin-Hhn1l of Cyriopagopus hainanus (Chinese bird spider).